The chain runs to 272 residues: NADPH-dependent 7-cyano-7-deazaguanine reductase (272 aa).

Substrate is bound at residue 82–84; it reads IES. 84-85 is an NADPH binding site; the sequence is SK. The Thioimide intermediate role is filled by cysteine 178. The active-site Proton donor is the aspartate 185. 217-218 contacts substrate; that stretch reads HE. Position 246–247 (246–247) interacts with NADPH; it reads RG.

It belongs to the GTP cyclohydrolase I family. QueF type 2 subfamily. As to quaternary structure, homodimer.

The protein resides in the cytoplasm. The enzyme catalyses 7-aminomethyl-7-carbaguanine + 2 NADP(+) = 7-cyano-7-deazaguanine + 2 NADPH + 3 H(+). It functions in the pathway tRNA modification; tRNA-queuosine biosynthesis. Functionally, catalyzes the NADPH-dependent reduction of 7-cyano-7-deazaguanine (preQ0) to 7-aminomethyl-7-deazaguanine (preQ1). This chain is NADPH-dependent 7-cyano-7-deazaguanine reductase, found in Stenotrophomonas maltophilia (strain K279a).